A 2336-amino-acid polypeptide reads, in one-letter code: RNA1 polyprotein (2336 aa).

Topologically, residues 599–1210 (QVARIARNIF…YLKEHGLEVL (612 aa)) are cytoplasmic. Residues 797–964 (MKDLLDLQQR…PGVVFDPMDC (168 aa)) form the SF3 helicase domain. 827–834 (GPSHCGKS) serves as a coordination point for ATP. A helical transmembrane segment spans residues 1211 to 1231 (LLLAAMMILCVALYYFVGAFI). At 1232–1253 (GVMGGALSMGAAMAGLKEVDMK) the chain is on the lumenal side. In terms of domain architecture, Peptidase C3 spans 1278–1486 (YARGELDEEV…WADNLPNPCM (209 aa)). Catalysis depends on for picornain 3C-like protease activity residues histidine 1320, glutamate 1358, and cysteine 1450. Residues 1771 to 1899 (DRAINCDYSS…SCTDKIAIYF (129 aa)) form the RdRp catalytic domain.

Belongs to the nepoviruses RNA1 polyprotein family. Post-translationally, specific enzymatic cleavages by picornain 3C-like protease in vivo yield mature proteins. Picornain 3C-like protease is autocatalytically processed. In terms of processing, VPg is uridylylated by the polymerase and is covalently linked to the 5'-end of genomic RNA. This uridylylated form acts as a nucleotide-peptide primer for the polymerase.

Its subcellular location is the host endoplasmic reticulum lumen. The protein localises to the host endoplasmic reticulum membrane. It carries out the reaction RNA(n) + a ribonucleoside 5'-triphosphate = RNA(n+1) + diphosphate. Picornain 3C-like protease is a thiol protease that cleaves the P1 and P2 polyproteins. The protein is RNA1 polyprotein of Cycas necrotic stunt virus (CNSV).